Here is a 321-residue protein sequence, read N- to C-terminus: Malate dehydrogenase (321 aa).

NAD(+) is bound by residues 10 to 15 (GAGQIG) and Asp-34. Substrate contacts are provided by Arg-83 and Arg-89. Residues Asn-96 and 119 to 121 (ITN) contribute to the NAD(+) site. The substrate site is built by Asn-121 and Arg-152. His-176 (proton acceptor) is an active-site residue.

This sequence belongs to the LDH/MDH superfamily. MDH type 3 family.

The enzyme catalyses (S)-malate + NAD(+) = oxaloacetate + NADH + H(+). In terms of biological role, catalyzes the reversible oxidation of malate to oxaloacetate. The protein is Malate dehydrogenase of Methylocella silvestris (strain DSM 15510 / CIP 108128 / LMG 27833 / NCIMB 13906 / BL2).